A 650-amino-acid polypeptide reads, in one-letter code: Threonine--tRNA ligase (650 aa).

One can recognise a TGS domain in the interval 1–66 (MVQITLPDGS…EHDAQLAIVT (66 aa)). The tract at residues 247 to 538 (DHRKIGRDLD…LIENHAGAMP (292 aa)) is catalytic. Positions 338, 389, and 515 each coordinate Zn(2+).

It belongs to the class-II aminoacyl-tRNA synthetase family. In terms of assembly, homodimer. Zn(2+) is required as a cofactor.

Its subcellular location is the cytoplasm. It catalyses the reaction tRNA(Thr) + L-threonine + ATP = L-threonyl-tRNA(Thr) + AMP + diphosphate + H(+). Catalyzes the attachment of threonine to tRNA(Thr) in a two-step reaction: L-threonine is first activated by ATP to form Thr-AMP and then transferred to the acceptor end of tRNA(Thr). Also edits incorrectly charged L-seryl-tRNA(Thr). This is Threonine--tRNA ligase from Bordetella petrii (strain ATCC BAA-461 / DSM 12804 / CCUG 43448).